The chain runs to 619 residues: Chaperone protein DnaK (619 aa).

A Phosphothreonine; by autocatalysis modification is found at threonine 179. The segment at 584 to 619 (QAKAQGAAGPQPGAQAQGQPNDGGKEDVVEAEVVDK) is disordered. Over residues 585 to 605 (AKAQGAAGPQPGAQAQGQPND) the composition is skewed to low complexity. Residues 606–619 (GGKEDVVEAEVVDK) are compositionally biased toward basic and acidic residues.

Belongs to the heat shock protein 70 family.

Acts as a chaperone. This chain is Chaperone protein DnaK, found in Elusimicrobium minutum (strain Pei191).